The sequence spans 174 residues: ATP-dependent protease subunit HslV (174 aa).

Residue T2 is part of the active site. Residues G157, C160, and T163 each contribute to the Na(+) site.

It belongs to the peptidase T1B family. HslV subfamily. A double ring-shaped homohexamer of HslV is capped on each side by a ring-shaped HslU homohexamer. The assembly of the HslU/HslV complex is dependent on binding of ATP.

Its subcellular location is the cytoplasm. It catalyses the reaction ATP-dependent cleavage of peptide bonds with broad specificity.. With respect to regulation, allosterically activated by HslU binding. Functionally, protease subunit of a proteasome-like degradation complex believed to be a general protein degrading machinery. In Shewanella piezotolerans (strain WP3 / JCM 13877), this protein is ATP-dependent protease subunit HslV.